The following is a 461-amino-acid chain: PE-PGRS family protein PE_PGRS45 (461 aa).

Residues Val-4–Ala-92 enclose the PE domain. Disordered regions lie at residues Gly-232–Gly-251 and Ala-426–Gly-461. Over residues Pro-434–Ser-446 the composition is skewed to gly residues.

This sequence belongs to the mycobacterial PE family. PGRS subfamily. Interacts with human TIMM23, which is part of a complex that mediates the translocation of transit peptide-containing proteins across the mitochondrial inner membrane.

Its subcellular location is the cell membrane. The protein resides in the secreted. The protein localises to the cell wall. It is found in the host mitochondrion. It carries out the reaction hexadecanal + NADP(+) + CoA = hexadecanoyl-CoA + NADPH + H(+). Its activity is regulated as follows. Oxidoreductase activity is inhibited by the first line anti-tubercular drug isoniazid (INH). Its function is as follows. May be an effector protein that contributes to pathogenesis by targeting host mitochondria, where it modulates host cellular processes. In THP1 macrophages, increases the ADP-to-ATP ratio and increases the cellular ROS levels. Also induces mitochondrial perturbations through membrane depolarization, release of mitochondrial superoxide, up-regulation of expression of host proapoptotic proteins (BAX and BIM) and release of cytochrome C into the cytosol. May bind calcium to increase intracellular calcium influx, which may further lead to mitochondrial perturbations. Mitochondrial perturbations and alteration of Ca(2+) influx are independent but simultaneous events. In terms of biological role, in vitro, shows NADPH-dependent fatty acyl coenzyme A oxidoreductase activity. Can oxidize palmitoyl-CoA, but not glutathione and thiourea. This chain is PE-PGRS family protein PE_PGRS45, found in Mycobacterium tuberculosis (strain ATCC 25618 / H37Rv).